Reading from the N-terminus, the 137-residue chain is Ribosome-binding factor A (137 aa).

It belongs to the RbfA family. In terms of assembly, monomer. Binds 30S ribosomal subunits, but not 50S ribosomal subunits or 70S ribosomes.

The protein resides in the cytoplasm. In terms of biological role, one of several proteins that assist in the late maturation steps of the functional core of the 30S ribosomal subunit. Associates with free 30S ribosomal subunits (but not with 30S subunits that are part of 70S ribosomes or polysomes). Required for efficient processing of 16S rRNA. May interact with the 5'-terminal helix region of 16S rRNA. This chain is Ribosome-binding factor A, found in Nitrobacter winogradskyi (strain ATCC 25391 / DSM 10237 / CIP 104748 / NCIMB 11846 / Nb-255).